An 851-amino-acid polypeptide reads, in one-letter code: DNA mismatch repair protein MutS (851 aa).

Residue 602–609 participates in ATP binding; it reads GPNMSGKS.

Belongs to the DNA mismatch repair MutS family.

Functionally, this protein is involved in the repair of mismatches in DNA. It is possible that it carries out the mismatch recognition step. This protein has a weak ATPase activity. The polypeptide is DNA mismatch repair protein MutS (Streptococcus equi subsp. equi (strain 4047)).